The sequence spans 717 residues: DNA-directed RNA polymerase subunit beta' (717 aa).

Residues cysteine 71, cysteine 73, cysteine 91, and cysteine 94 each coordinate Zn(2+). Residues aspartate 481, aspartate 483, and aspartate 485 each coordinate Mg(2+).

The protein belongs to the RNA polymerase beta' chain family. RpoC1 subfamily. In plastids the minimal PEP RNA polymerase catalytic core is composed of four subunits: alpha, beta, beta', and beta''. When a (nuclear-encoded) sigma factor is associated with the core the holoenzyme is formed, which can initiate transcription. It depends on Mg(2+) as a cofactor. Requires Zn(2+) as cofactor.

It is found in the plastid. Its subcellular location is the chloroplast. The enzyme catalyses RNA(n) + a ribonucleoside 5'-triphosphate = RNA(n+1) + diphosphate. Functionally, DNA-dependent RNA polymerase catalyzes the transcription of DNA into RNA using the four ribonucleoside triphosphates as substrates. The chain is DNA-directed RNA polymerase subunit beta' from Chlorokybus atmophyticus (Soil alga).